We begin with the raw amino-acid sequence, 288 residues long: Centromere protein P (288 aa).

A coiled-coil region spans residues 1 to 71; it reads MDAELAEVRA…HLESELSFLS (71 aa). Residue S38 is modified to Phosphoserine.

This sequence belongs to the CENP-P/CTF19 family. Component of the CENPA-CAD complex, composed of CENPI, CENPK, CENPL, CENPO, CENPP, CENPQ, CENPR and CENPS. The CENPA-CAD complex interacts with the CENPA-NAC complex, at least composed of CENPA, CENPC, CENPH, CENPM, CENPN, CENPT and CENPU.

It localises to the nucleus. The protein localises to the chromosome. Its subcellular location is the centromere. Its function is as follows. Component of the CENPA-CAD (nucleosome distal) complex, a complex recruited to centromeres which is involved in assembly of kinetochore proteins, mitotic progression and chromosome segregation. May be involved in incorporation of newly synthesized CENPA into centromeres via its interaction with the CENPA-NAC complex. In Homo sapiens (Human), this protein is Centromere protein P (CENPP).